A 310-amino-acid chain; its full sequence is Ribosomal RNA small subunit methyltransferase H (310 aa).

S-adenosyl-L-methionine contacts are provided by residues 32–34 (GGH), Asp52, Phe79, Asp100, and Gln107.

It belongs to the methyltransferase superfamily. RsmH family.

The protein resides in the cytoplasm. It catalyses the reaction cytidine(1402) in 16S rRNA + S-adenosyl-L-methionine = N(4)-methylcytidine(1402) in 16S rRNA + S-adenosyl-L-homocysteine + H(+). In terms of biological role, specifically methylates the N4 position of cytidine in position 1402 (C1402) of 16S rRNA. The chain is Ribosomal RNA small subunit methyltransferase H from Bacillus cereus (strain ATCC 10987 / NRS 248).